We begin with the raw amino-acid sequence, 741 residues long: Ion-translocating oxidoreductase complex subunit C (741 aa).

4Fe-4S ferredoxin-type domains follow at residues 369-397 and 407-436; these read GEPQ…QQLY and KATT…VQYF. [4Fe-4S] cluster contacts are provided by C377, C380, C383, C387, C416, C419, C422, and C426. Residues 627 to 654 form a disordered region; sequence IARAKARKLEQQQQANAEPEEQVDPRKA.

This sequence belongs to the 4Fe4S bacterial-type ferredoxin family. RnfC subfamily. As to quaternary structure, the complex is composed of six subunits: RsxA, RsxB, RsxC, RsxD, RsxE and RsxG. Requires [4Fe-4S] cluster as cofactor.

The protein localises to the cell inner membrane. Its function is as follows. Part of a membrane-bound complex that couples electron transfer with translocation of ions across the membrane. Required to maintain the reduced state of SoxR. The polypeptide is Ion-translocating oxidoreductase complex subunit C (Escherichia coli O127:H6 (strain E2348/69 / EPEC)).